Consider the following 123-residue polypeptide: uncharacterized protein (123 aa).

A signal peptide spans 1 to 25 (MKHGIKALLITLSLACAGMSHSALA). Residues 40-53 (EAPAAQSKAAVPAK) show a composition bias toward low complexity. Residues 40–62 (EAPAAQSKAAVPAKASDEEGTRV) are disordered. 2 consecutive HhH domains span residues 60 to 90 (TRVSINNASAEELARAMNGVGLKKAQAIVSY) and 91 to 120 (REEYGPFKTVEDLKQVPGMGNSLVERNLAV).

This is an uncharacterized protein from Escherichia coli (strain K12).